The primary structure comprises 169 residues: Alpha-S2-casein-like B (169 aa).

An N-terminal signal peptide occupies residues 1–15; the sequence is MKFIILTCLLAVALA.

This sequence belongs to the alpha-casein family. As to expression, mammary gland specific. Secreted in milk.

The protein resides in the secreted. Functionally, important role in the capacity of milk to transport calcium phosphate. The polypeptide is Alpha-S2-casein-like B (Csn1s2b) (Rattus norvegicus (Rat)).